The chain runs to 223 residues: Deoxyribose-phosphate aldolase (223 aa).

The Proton donor/acceptor role is filled by Asp89. The Schiff-base intermediate with acetaldehyde role is filled by Lys152. Lys181 (proton donor/acceptor) is an active-site residue.

It belongs to the DeoC/FbaB aldolase family. DeoC type 1 subfamily.

It is found in the cytoplasm. It carries out the reaction 2-deoxy-D-ribose 5-phosphate = D-glyceraldehyde 3-phosphate + acetaldehyde. The protein operates within carbohydrate degradation; 2-deoxy-D-ribose 1-phosphate degradation; D-glyceraldehyde 3-phosphate and acetaldehyde from 2-deoxy-alpha-D-ribose 1-phosphate: step 2/2. Functionally, catalyzes a reversible aldol reaction between acetaldehyde and D-glyceraldehyde 3-phosphate to generate 2-deoxy-D-ribose 5-phosphate. This chain is Deoxyribose-phosphate aldolase, found in Listeria monocytogenes serotype 4b (strain CLIP80459).